The primary structure comprises 465 residues: Sodium-dependent phosphate transport protein 1 (465 aa).

N-linked (GlcNAc...) asparagine glycans are attached at residues asparagine 39, asparagine 47, and asparagine 56. The next 10 helical transmembrane spans lie at 79-99 (GLIL…VGYL), 117-137 (SLMS…VIVC), 176-196 (FVMG…LLGW), 199-219 (VFYI…FLFF), 260-280 (LPLW…SLLV), 304-324 (LPYL…DFFL), 337-356 (LFTT…LLYL), 363-383 (TVIF…GQLI), 399-419 (VTAL…GLIL), and 429-449 (KIFF…FLFA).

The protein belongs to the major facilitator superfamily. Sodium/anion cotransporter family. In terms of assembly, interacts with PDZK1. As to expression, kidney.

The protein localises to the apical cell membrane. It carries out the reaction 3 Na(+)(out) + phosphate(out) = 3 Na(+)(in) + phosphate(in). It catalyses the reaction urate(out) = urate(in). Important for the resorption of phosphate by the kidney. May be involved in actively transporting phosphate into cells via Na(+) cotransport in the renal brush border membrane. Plays a role in urate transport in the kidney. The protein is Sodium-dependent phosphate transport protein 1 (Slc17a1) of Mus musculus (Mouse).